A 100-amino-acid chain; its full sequence is UPF0213 protein YhbQ (100 aa).

The 76-residue stretch at 2–77 (TPWFLYLIRT…KQLTKRQKER (76 aa)) folds into the GIY-YIG domain.

The protein belongs to the UPF0213 family.

The sequence is that of UPF0213 protein YhbQ from Escherichia fergusonii (strain ATCC 35469 / DSM 13698 / CCUG 18766 / IAM 14443 / JCM 21226 / LMG 7866 / NBRC 102419 / NCTC 12128 / CDC 0568-73).